The chain runs to 409 residues: Testis-expressed protein 13A (409 aa).

Residues 92-408 form a required for repression of transcription region; sequence WLHGFAKLHK…CGKGIWLQKP (317 aa). The interval 347–374 is disordered; it reads GGPHRIDHQEHPRDRRYSEPHQQRPPVY. Residues 348–368 show a composition bias toward basic and acidic residues; it reads GPHRIDHQEHPRDRRYSEPHQ. Residues 376–400 form a RanBP2-type zinc finger; it reads RPGDWDCPWCNAVNFSRRDTCFDCG. Residues C382, C385, C396, and C399 each coordinate Zn(2+).

Belongs to the TEX13 family. Interacts with CNOT1; the interaction may inhibit CNOT1 binding to mRNA and subsequently CNOT1-mediated mRNA degradation. Testis specific.

Functionally, binds to ssRNA containing the consensus sequence 5'-AGGUAA-3'. Plays a role in transcriptional repression. Required for rapid sperm motility and timely degradation of mRNA via its interaction with CNOT1. The protein is Testis-expressed protein 13A of Homo sapiens (Human).